Reading from the N-terminus, the 478-residue chain is Lipoprotein lipase (478 aa).

A signal peptide spans 1–27 (MESKVLLLLALSVWLQSLTVSRGGLVA). Residues 35–56 (KDFRDIESKFALRTPEDTAEDT) are interaction with GPIHBP1. The cysteines at positions 57 and 70 are disulfide-linked. A glycan (N-linked (GlcNAc...) asparagine) is linked at asparagine 73. Residue tyrosine 124 is modified to 3'-nitrotyrosine. The Nucleophile role is filled by serine 162. The Charge relay system role is filled by aspartate 186. Position 194 is a 3'-nitrotyrosine (tyrosine 194). Ca(2+) is bound by residues alanine 197, arginine 200, serine 202, and aspartate 205. Cysteine 246 and cysteine 269 are joined by a disulfide. The segment at 246–269 (CNIGEALRVIAERGLGDVDQLVKC) is essential for determining substrate specificity. The Charge relay system role is filled by histidine 271. Cystine bridges form between cysteine 294-cysteine 313 and cysteine 305-cysteine 308. Positions 344–467 (FHYQVKIHFS…KGKSPVIFVK (124 aa)) constitute a PLAT domain. A 3'-nitrotyrosine modification is found at tyrosine 346. Asparagine 389 carries an N-linked (GlcNAc...) asparagine glycan. Residues 420-424 (WSNWW) are important for interaction with lipoprotein particles. Positions 433–437 (KIRVK) are important for heparin binding. Residues 446-470 (IFCSREKMSYLQKGKSPVIFVKCHD) are interaction with GPIHBP1. An intrachain disulfide couples cysteine 448 to cysteine 468.

The protein belongs to the AB hydrolase superfamily. Lipase family. As to quaternary structure, homodimer. Interacts with GPIHBP1 with 1:1 stoichiometry. Interacts with APOC2; the interaction activates LPL activity in the presence of lipids. Interaction with heparan sulfate proteoglycans is required to protect LPL against loss of activity. Associates with lipoprotein particles in blood plasma. Interacts with LMF1 and SEL1L; interaction with SEL1L is required to prevent aggregation of newly synthesized LPL in the endoplasmic reticulum (ER), and for normal export of LPL from the ER to the extracellular space. Interacts with SORL1; SORL1 acts as a sorting receptor, promoting LPL localization to endosomes and later to lysosomes, leading to degradation of newly synthesized LPL. Tyrosine nitration after lipopolysaccharide (LPS) challenge down-regulates the lipase activity.

Its subcellular location is the cell membrane. The protein resides in the secreted. The protein localises to the extracellular space. It is found in the extracellular matrix. It carries out the reaction a triacylglycerol + H2O = a diacylglycerol + a fatty acid + H(+). It catalyses the reaction a 1,2-diacyl-sn-glycero-3-phosphocholine + H2O = a 2-acyl-sn-glycero-3-phosphocholine + a fatty acid + H(+). The enzyme catalyses 1,2,3-tri-(9Z-octadecenoyl)-glycerol + H2O = di-(9Z)-octadecenoylglycerol + (9Z)-octadecenoate + H(+). The catalysed reaction is 1,2-di-(9Z-octadecenoyl)-sn-glycero-3-phosphocholine + H2O = (9Z-octadecenoyl)-sn-glycero-3-phosphocholine + (9Z)-octadecenoate + H(+). It carries out the reaction 1,2,3-tributanoylglycerol + H2O = dibutanoylglycerol + butanoate + H(+). It catalyses the reaction 1,2-dihexadecanoyl-sn-glycero-3-phosphocholine + H2O = hexadecanoyl-sn-glycero-3-phosphocholine + hexadecanoate + H(+). Its activity is regulated as follows. The apolipoprotein APOC2 acts as a coactivator of LPL activity. Ca(2+) binding promotes protein stability and formation of the active homodimer. Interaction with GPIHBP1 protects LPL against inactivation by ANGPTL4. In terms of biological role, key enzyme in triglyceride metabolism. Catalyzes the hydrolysis of triglycerides from circulating chylomicrons and very low density lipoproteins (VLDL), and thereby plays an important role in lipid clearance from the blood stream, lipid utilization and storage. Although it has both phospholipase and triglyceride lipase activities it is primarily a triglyceride lipase with low but detectable phospholipase activity. Mediates margination of triglyceride-rich lipoprotein particles in capillaries. Recruited to its site of action on the luminal surface of vascular endothelium by binding to GPIHBP1 and cell surface heparan sulfate proteoglycans. In Ovis aries (Sheep), this protein is Lipoprotein lipase (LPL).